A 79-amino-acid polypeptide reads, in one-letter code: Tau-theraphotoxin-Hs1a (79 aa).

6 disulfides stabilise this stretch: Cys2–Cys16, Cys9–Cys23, Cys15–Cys31, Cys44–Cys58, Cys51–Cys63, and Cys57–Cys71. Domain repeat units follow at residues 2–31 (CAKEGEVCSWGKKCCDLDNFYCPMEFIPHC) and 42–71 (TNCAKEGEVCGWGSKCCHGLDCPLAFIPYC). The tract at residues 2 to 71 (CAKEGEVCSW…DCPLAFIPYC (70 aa)) is 2 X approximate repeats with cysteine pattern C-C-CC-C-C.

This sequence belongs to the neurotoxin 23 family. Double-knot toxin subfamily. Interacts with TRPV1 (2 toxins (4 moieties) bind 1 channel (homotetramer)). In terms of tissue distribution, expressed by the venom gland.

It localises to the secreted. Selectively activates the heat-activated TRPV1 channel. It binds to TRPV1 in an open state-dependent manner, trapping it there to produce irreversible currents. It binds to the outer edge of the external pore of TRPV1 in a counterclockwise configuration, using a limited protein-protein interface and inserting hydrophobic residues into the bilayer. It also partitions naturally into membranes, with the two lobes exhibiting opposing energetics for membrane partitioning (K1) and channel activation (K2). In addition, the toxin disrupts a cluster of hydrophobic residues behind the selectivity filter that are critical for channel activation. In Cyriopagopus schmidti (Chinese bird spider), this protein is Tau-theraphotoxin-Hs1a.